Reading from the N-terminus, the 327-residue chain is Phenylalanine--tRNA ligase alpha subunit (327 aa).

Mg(2+) is bound at residue glutamate 252.

It belongs to the class-II aminoacyl-tRNA synthetase family. Phe-tRNA synthetase alpha subunit type 1 subfamily. In terms of assembly, tetramer of two alpha and two beta subunits. Mg(2+) serves as cofactor.

The protein localises to the cytoplasm. The enzyme catalyses tRNA(Phe) + L-phenylalanine + ATP = L-phenylalanyl-tRNA(Phe) + AMP + diphosphate + H(+). The protein is Phenylalanine--tRNA ligase alpha subunit of Yersinia pseudotuberculosis serotype O:1b (strain IP 31758).